Consider the following 840-residue polypeptide: UPF0508 protein SCY_2952 (840 aa).

It belongs to the UPF0508 family.

The sequence is that of UPF0508 protein SCY_2952 from Saccharomyces cerevisiae (strain YJM789) (Baker's yeast).